The sequence spans 648 residues: Serine/threonine-protein kinase DCLK3 (648 aa).

Disordered regions lie at residues 86–127 and 150–345; these read DDRA…HLGV and QSLE…PRPM. 5 stretches are compositionally biased toward basic and acidic residues: residues 98 to 127, 213 to 234, 255 to 266, 277 to 303, and 312 to 338; these read GKWE…HLGV, ELRR…DQES, EGLREVKKDTRP, LREH…EKKP, and TLRD…ERPS. Residues 356–613 form the Protein kinase domain; it reads YETGRVIGDG…AHQVLQHPWI (258 aa). Residues 362–370 and lysine 385 contribute to the ATP site; that span reads IGDGNFAVV. Aspartate 477 (proton acceptor) is an active-site residue. Residues 628–648 form a disordered region; sequence VSPSSEGHFRSQHKRVVEQVS.

It belongs to the protein kinase superfamily. CAMK Ser/Thr protein kinase family. CaMK subfamily.

The protein localises to the cytoplasm. It is found in the nucleus. The catalysed reaction is L-seryl-[protein] + ATP = O-phospho-L-seryl-[protein] + ADP + H(+). The enzyme catalyses L-threonyl-[protein] + ATP = O-phospho-L-threonyl-[protein] + ADP + H(+). This is Serine/threonine-protein kinase DCLK3 (DCLK3) from Homo sapiens (Human).